A 374-amino-acid chain; its full sequence is ATPase ASNA1 homolog (374 aa).

Residue 44–51 (KGGVGKTT) coordinates ATP. Asp-73 is an active-site residue. Glu-244 and Asn-271 together coordinate ATP.

The protein belongs to the arsA ATPase family. Homodimer.

The protein resides in the cytoplasm. It localises to the endoplasmic reticulum. ATPase required for the post-translational delivery of tail-anchored (TA) proteins to the endoplasmic reticulum. Recognizes and selectively binds the transmembrane domain of TA proteins in the cytosol. This complex then targets to the endoplasmic reticulum by membrane-bound receptors, where the tail-anchored protein is released for insertion. This process is regulated by ATP binding and hydrolysis. ATP binding drives the homodimer towards the closed dimer state, facilitating recognition of newly synthesized TA membrane proteins. ATP hydrolysis is required for insertion. Subsequently, the homodimer reverts towards the open dimer state, lowering its affinity for the membrane-bound receptor, and returning it to the cytosol to initiate a new round of targeting. In Plasmodium vivax (strain Salvador I), this protein is ATPase ASNA1 homolog.